The chain runs to 231 residues: Ninja-family protein AFP3 (231 aa).

A compositionally biased stretch (basic residues) spans 83–96 (AKRKRSEKQRKHKA). Residues 83 to 152 (AKRKRSEKQR…SAQSQPENLG (70 aa)) form a disordered region. Residues 130 to 152 (QATTNKSVETSPSSAQSQPENLG) show a composition bias toward polar residues.

This sequence belongs to the Ninja family. Forms a heterodimer with AFP2. Interacts with ABI5/DPBF1, DPBF2, AREB3/DPBF3, EEL/DPBF4, ABF1, ABF3/DPBF5 and ABF4/AREB2.

It localises to the nucleus. Acts as a negative regulator of abscisic acid (ABA) response and stress responses. This chain is Ninja-family protein AFP3 (AFP3), found in Arabidopsis thaliana (Mouse-ear cress).